The following is a 257-amino-acid chain: uncharacterized protein (257 aa).

The signal sequence occupies residues 1–22; that stretch reads MGYLKRFALYISVMILMFAIAG. A lipid anchor (N-palmitoyl cysteine) is attached at C23. Residue C23 is the site of S-diacylglycerol cysteine attachment.

The protein belongs to the staphylococcal tandem lipoprotein family.

It is found in the cell membrane. This is an uncharacterized protein from Staphylococcus aureus (strain MRSA252).